A 280-amino-acid polypeptide reads, in one-letter code: UPF0328 protein ECU06_0020/ECU06_1700 (280 aa).

Belongs to the UPF0328 family.

The protein is UPF0328 protein ECU06_0020/ECU06_1700 of Encephalitozoon cuniculi (strain GB-M1) (Microsporidian parasite).